Here is an 87-residue protein sequence, read N- to C-terminus: Small ribosomal subunit protein bS20 (87 aa).

A disordered region spans residues 1-26 (MANIKSAKKRAIQSEKRRKHNASRRS).

Belongs to the bacterial ribosomal protein bS20 family.

Binds directly to 16S ribosomal RNA. This is Small ribosomal subunit protein bS20 from Photorhabdus laumondii subsp. laumondii (strain DSM 15139 / CIP 105565 / TT01) (Photorhabdus luminescens subsp. laumondii).